The primary structure comprises 303 residues: Glutathione transport system permease protein GsiD (303 aa).

6 helical membrane-spanning segments follow: residues alanine 40 to isoleucine 60, leucine 105 to leucine 125, leucine 144 to isoleucine 164, alanine 165 to glycine 185, isoleucine 222 to phenylalanine 242, and valine 266 to phenylalanine 286. One can recognise an ABC transmembrane type-1 domain in the interval alanine 101–glycine 290.

Belongs to the binding-protein-dependent transport system permease family. The complex is composed of two ATP-binding proteins (GsiA), two transmembrane proteins (GsiC and GsiD) and a solute-binding protein (GsiB).

The protein localises to the cell inner membrane. Its function is as follows. Part of the ABC transporter complex GsiABCD involved in glutathione import. Probably responsible for the translocation of the substrate across the membrane. In Escherichia coli O6:K15:H31 (strain 536 / UPEC), this protein is Glutathione transport system permease protein GsiD.